A 131-amino-acid polypeptide reads, in one-letter code: D-ribose pyranase (131 aa).

Residue histidine 20 is the Proton donor of the active site. Substrate is bound by residues aspartate 28, histidine 98, and 120 to 122 (YAN).

It belongs to the RbsD / FucU family. RbsD subfamily. In terms of assembly, homodecamer.

It is found in the cytoplasm. It catalyses the reaction beta-D-ribopyranose = beta-D-ribofuranose. The protein operates within carbohydrate metabolism; D-ribose degradation; D-ribose 5-phosphate from beta-D-ribopyranose: step 1/2. In terms of biological role, catalyzes the interconversion of beta-pyran and beta-furan forms of D-ribose. This chain is D-ribose pyranase, found in Chloroflexus aggregans (strain MD-66 / DSM 9485).